We begin with the raw amino-acid sequence, 504 residues long: Probable phenylalanine--tRNA ligase beta subunit (504 aa).

Residues Ile270–Met346 enclose the B5 domain. Residues Asp324, Asp330, Glu333, and Asp334 each contribute to the Mg(2+) site.

Belongs to the phenylalanyl-tRNA synthetase beta subunit family. Type 2 subfamily. In terms of assembly, tetramer of two alpha and two beta subunits. The cofactor is Mg(2+).

The protein resides in the cytoplasm. The catalysed reaction is tRNA(Phe) + L-phenylalanine + ATP = L-phenylalanyl-tRNA(Phe) + AMP + diphosphate + H(+). This Vairimorpha ceranae (strain BRL01) (Microsporidian parasite) protein is Probable phenylalanine--tRNA ligase beta subunit.